The primary structure comprises 610 residues: L-galactono-1,4-lactone dehydrogenase, mitochondrial (610 aa).

Residues 1–35 (MLRSLLLRRSVGHSLGTLSPSSSTIRSSFSPHRTL) constitute a mitochondrion transit peptide. Residues 17-61 (TLSPSSSTIRSSFSPHRTLCTTGQTLTPPPPPPPRPPPPPPATAS) are disordered. Over residues 19-30 (SPSSSTIRSSFS) the composition is skewed to low complexity. Residues 36–101 (CTTGQTLTPP…AKHKKAQIFR (66 aa)) constitute a propeptide, removed in mature form. Residues 43–58 (TPPPPPPPRPPPPPPA) show a composition bias toward pro residues. Residues 68 to 84 (YAGYAALAIFSGVATYF) traverse the membrane as a helical segment. One can recognise an FAD-binding PCMH-type domain in the interval 123–258 (TRNFNQPENL…TPAKGTIELS (136 aa)).

FAD is required as a cofactor.

It is found in the mitochondrion membrane. The enzyme catalyses L-galactono-1,4-lactone + 4 Fe(III)-[cytochrome c] = L-dehydroascorbate + 4 Fe(II)-[cytochrome c] + 5 H(+). It carries out the reaction L-gulono-1,4-lactone + 2 Fe(III)-[cytochrome c] = L-ascorbate + 2 Fe(II)-[cytochrome c] + 3 H(+). It functions in the pathway cofactor biosynthesis; L-ascorbate biosynthesis. Involved in the biosynthesis of ascorbate. Catalyzes the final step of ascorbate biosynthesis. Uses L-galactono-1,4-lactone and L-gulono-1,4-lactone as substrates, but not D-galactono-1,4-lactone, D-gulono-1,4-lactone, L-mannono-1,4-lactone or D-galactonic acid. Also active with phenazine methosulfate and 1,4-benzoquinone as electron acceptors. Involved in the regulation of the accumulation of the mitochondrial respiratory complex I. Structural part of one of the plant-specific mitochondrial complex I assembly intermediates, lacking the whole distal (PD) module. Prevents the binding of the plant specific P1 protein (CPN60/HSP60), responsible for the linkage of the proximal (PP) to the distal (PD) module. In Arabidopsis thaliana (Mouse-ear cress), this protein is L-galactono-1,4-lactone dehydrogenase, mitochondrial.